We begin with the raw amino-acid sequence, 228 residues long: UPF0758 protein RALTA_A2508 (228 aa).

Positions 102–224 (GFDSPDSVRS…IRSLAESCER (123 aa)) constitute an MPN domain. Zn(2+) is bound by residues histidine 173, histidine 175, and aspartate 186. The JAMM motif motif lies at 173–186 (HNHPRGTTAPSQSD).

Belongs to the UPF0758 family.

The protein is UPF0758 protein RALTA_A2508 of Cupriavidus taiwanensis (strain DSM 17343 / BCRC 17206 / CCUG 44338 / CIP 107171 / LMG 19424 / R1) (Ralstonia taiwanensis (strain LMG 19424)).